We begin with the raw amino-acid sequence, 193 residues long: Cysteine and glycine-rich protein 2 (193 aa).

The 52-residue stretch at Cys-10–Cys-61 folds into the LIM zinc-binding 1 domain. The Nuclear localization signal signature appears at Lys-64 to Lys-69. Lys-91 is covalently cross-linked (Glycyl lysine isopeptide (Lys-Gly) (interchain with G-Cter in SUMO2)). An N6-acetyllysine mark is found at Lys-112 and Lys-131. In terms of domain architecture, LIM zinc-binding 2 spans Cys-119 to Cys-170. Position 137 is an N6-acetyllysine; alternate (Lys-137). An N6-succinyllysine; alternate modification is found at Lys-137. Lys-161 is subject to N6-acetyllysine.

As to quaternary structure, interacts with KAT14. The LIM domain 1 is necessary and sufficient for this interaction. Interacts with GLRX3.

The protein resides in the nucleus. Its function is as follows. Drastically down-regulated in response to PDGF-BB or cell injury, that promote smooth muscle cell proliferation and dedifferentiation. Seems to play a role in the development of the embryonic vascular system. This chain is Cysteine and glycine-rich protein 2 (CSRP2), found in Bos taurus (Bovine).